The sequence spans 248 residues: Small ribosomal subunit protein uS3 (248 aa).

In terms of domain architecture, KH type-2 spans 39–113; that stretch reads IRAYLTKQLS…TIRINVVEVT (75 aa). Positions 218 to 248 are disordered; it reads ERPEQKVPLQQPKRRQQRRRPTFEDRSAVEA. Residues 238–248 are compositionally biased toward basic and acidic residues; that stretch reads PTFEDRSAVEA.

The protein belongs to the universal ribosomal protein uS3 family. As to quaternary structure, part of the 30S ribosomal subunit. Forms a tight complex with proteins S10 and S14.

Binds the lower part of the 30S subunit head. Binds mRNA in the 70S ribosome, positioning it for translation. The sequence is that of Small ribosomal subunit protein uS3 from Synechococcus sp. (strain JA-3-3Ab) (Cyanobacteria bacterium Yellowstone A-Prime).